The primary structure comprises 177 residues: Acireductone dioxygenase (177 aa).

Residues 1-23 (MVRAWYMDDSDADQRAPHMTDPP) are disordered. Positions 86, 88, 92, and 131 each coordinate Fe(2+). Residues His-86, His-88, Glu-92, and His-131 each coordinate Ni(2+).

Belongs to the acireductone dioxygenase (ARD) family. Requires Fe(2+) as cofactor. The cofactor is Ni(2+).

Its subcellular location is the cytoplasm. The protein resides in the nucleus. It carries out the reaction 1,2-dihydroxy-5-(methylsulfanyl)pent-1-en-3-one + O2 = 4-methylsulfanyl-2-oxobutanoate + formate + 2 H(+). The enzyme catalyses 1,2-dihydroxy-5-(methylsulfanyl)pent-1-en-3-one + O2 = 3-(methylsulfanyl)propanoate + CO + formate + 2 H(+). It functions in the pathway amino-acid biosynthesis; L-methionine biosynthesis via salvage pathway; L-methionine from S-methyl-5-thio-alpha-D-ribose 1-phosphate: step 5/6. In terms of biological role, catalyzes 2 different reactions between oxygen and the acireductone 1,2-dihydroxy-3-keto-5-methylthiopentene (DHK-MTPene) depending upon the metal bound in the active site. Fe-containing acireductone dioxygenase (Fe-ARD) produces formate and 2-keto-4-methylthiobutyrate (KMTB), the alpha-ketoacid precursor of methionine in the methionine recycle pathway. Ni-containing acireductone dioxygenase (Ni-ARD) produces methylthiopropionate, carbon monoxide and formate, and does not lie on the methionine recycle pathway. This is Acireductone dioxygenase from Branchiostoma floridae (Florida lancelet).